The primary structure comprises 244 residues: tRNA (guanine-N(1)-)-methyltransferase (244 aa).

Residues G112 and 132–137 (IGDYIL) contribute to the S-adenosyl-L-methionine site.

The protein belongs to the RNA methyltransferase TrmD family. Homodimer.

The protein resides in the cytoplasm. The enzyme catalyses guanosine(37) in tRNA + S-adenosyl-L-methionine = N(1)-methylguanosine(37) in tRNA + S-adenosyl-L-homocysteine + H(+). Its function is as follows. Specifically methylates guanosine-37 in various tRNAs. In Geobacillus kaustophilus (strain HTA426), this protein is tRNA (guanine-N(1)-)-methyltransferase.